A 337-amino-acid polypeptide reads, in one-letter code: Large ribosomal subunit protein uL3 (337 aa).

The tract at residues 1 to 29 (MARHHQPRKGSVAFSPRKRAARETPRVKS) is disordered.

Belongs to the universal ribosomal protein uL3 family. As to quaternary structure, part of the 50S ribosomal subunit. Forms a cluster with proteins L14 and L24e.

Its function is as follows. One of the primary rRNA binding proteins, it binds directly near the 3'-end of the 23S rRNA, where it nucleates assembly of the 50S subunit. This Methanothermobacter thermautotrophicus (strain ATCC 29096 / DSM 1053 / JCM 10044 / NBRC 100330 / Delta H) (Methanobacterium thermoautotrophicum) protein is Large ribosomal subunit protein uL3.